We begin with the raw amino-acid sequence, 376 residues long: Zinc transporter 7 (376 aa).

The Cytoplasmic portion of the chain corresponds to 1–37; it reads MLPLSIKDDEYKPPKFNLFRKISGWFRSILSDKTSRN. Residues 38–58 form a helical membrane-spanning segment; it reads LFFFLCLNLSFAFVELLYGIW. Over 59–67 the chain is Lumenal; the sequence is SNCLGLISD. Residues 68 to 88 form a helical membrane-spanning segment; sequence SFHMFFDSTAILAGLAASVIS. At 89–102 the chain is on the cytoplasmic side; sequence KWRDNDAFSYGYVR. A helical membrane pass occupies residues 103 to 123; sequence AEVLAGFVNGLFLIFTAFFIF. Residues 124–140 are Lumenal-facing; sequence SEGVERALAPPDVHHER. A helical transmembrane segment spans residues 141–161; that stretch reads LLLVSILGFVVNLVGIFVFKH. Residues 161 to 218 form a his-rich loop region; it reads HGGHGHSHGSGHGHSHSLFNGALDQTHGHGDHCHSHELKHGAAHSHDHAHGHGHFHSH. Topologically, residues 162-236 are cytoplasmic; the sequence is GGHGHSHGSG…TGPSRQILQG (75 aa). Residues 188–222 are compositionally biased toward basic and acidic residues; sequence GHGDHCHSHELKHGAAHSHDHAHGHGHFHSHDGPS. A disordered region spans residues 188 to 226; the sequence is GHGDHCHSHELKHGAAHSHDHAHGHGHFHSHDGPSLKET. A helical transmembrane segment spans residues 237-257; that stretch reads VFLHILADTLGSIGVIASAIM. The Lumenal segment spans residues 258-262; the sequence is MQNFG. The chain crosses the membrane as a helical span at residues 263-283; sequence LMIADPICSILIAMLIVISVI. Residues 284–376 are Cytoplasmic-facing; that stretch reads PLLRESVGIL…LYVQIDFAAM (93 aa).

The protein belongs to the cation diffusion facilitator (CDF) transporter (TC 2.A.4) family. SLC30A subfamily. Homooligomer.

It is found in the golgi apparatus membrane. The protein resides in the cytoplasmic vesicle. Its subcellular location is the golgi apparatus. It localises to the trans-Golgi network. The protein localises to the sarcoplasmic reticulum. It is found in the mitochondrion. The catalysed reaction is Zn(2+)(in) = Zn(2+)(out). Zinc ion transporter mediating zinc entry from the cytosol into the lumen of organelles along the secretory pathway. By contributing to zinc ion homeostasis within the early secretory pathway, regulates the activation and folding of enzymes like alkaline phosphatases. In Bos taurus (Bovine), this protein is Zinc transporter 7 (SLC30A7).